The sequence spans 116 residues: Large ribosomal subunit protein bL19 (116 aa).

It belongs to the bacterial ribosomal protein bL19 family.

In terms of biological role, this protein is located at the 30S-50S ribosomal subunit interface and may play a role in the structure and function of the aminoacyl-tRNA binding site. The polypeptide is Large ribosomal subunit protein bL19 (Fusobacterium nucleatum subsp. nucleatum (strain ATCC 25586 / DSM 15643 / BCRC 10681 / CIP 101130 / JCM 8532 / KCTC 2640 / LMG 13131 / VPI 4355)).